Consider the following 64-residue polypeptide: Large ribosomal subunit protein bL35 (64 aa).

This sequence belongs to the bacterial ribosomal protein bL35 family.

The protein is Large ribosomal subunit protein bL35 of Pseudomonas savastanoi pv. phaseolicola (strain 1448A / Race 6) (Pseudomonas syringae pv. phaseolicola (strain 1448A / Race 6)).